A 113-amino-acid chain; its full sequence is MSLRYYIKNILFGLYCALIYIYLITKNNEGYYFLASDKMLYAIVISTILCPYSKYAIEHIFFKFIKKDFFRKRKNLNKCPRGKIKPYLCVYNLLCLVLAIPFGLLGLVYINKE.

In terms of biological role, this protein is able to protect a cell, which harbors the plasmid pKY-1 encoding colicin E1*, against colicin E1*. This chain is Colicin-E1* immunity protein (imm), found in Shigella sonnei.